Here is a 396-residue protein sequence, read N- to C-terminus: uncharacterized protein (396 aa).

This is an uncharacterized protein from Pseudomonas amyloderamosa.